Consider the following 81-residue polypeptide: Exodeoxyribonuclease 7 small subunit (81 aa).

It belongs to the XseB family. In terms of assembly, heterooligomer composed of large and small subunits.

It localises to the cytoplasm. It catalyses the reaction Exonucleolytic cleavage in either 5'- to 3'- or 3'- to 5'-direction to yield nucleoside 5'-phosphates.. Its function is as follows. Bidirectionally degrades single-stranded DNA into large acid-insoluble oligonucleotides, which are then degraded further into small acid-soluble oligonucleotides. The sequence is that of Exodeoxyribonuclease 7 small subunit from Rhodopseudomonas palustris (strain BisA53).